The chain runs to 273 residues: BTB and MATH domain-containing protein 15 (273 aa).

The region spanning 7-123 (EFVFHHTFKD…DNSFTIEACV (117 aa)) is the MATH domain. Residues 147–206 (SDVILVVGDEKFYVLKLFLASHSSYFNALFLGKFKEADQSEVTLQNIDPTDFQSLLEVLY) enclose the BTB domain.

Interacts with cul-3.

It participates in protein modification; protein ubiquitination. Functionally, probable substrate-specific adapter of an E3 ubiquitin-protein ligase complex which mediates the ubiquitination and subsequent proteasomal degradation of target proteins. This is BTB and MATH domain-containing protein 15 (bath-15) from Caenorhabditis elegans.